The primary structure comprises 298 residues: uncharacterized protein (298 aa).

10 consecutive transmembrane segments (helical) span residues I5–F25, M36–F56, V76–A96, T97–L117, S124–V144, V147–I167, V181–I201, I216–A236, I244–G264, and S272–L292. Positions L17 to D141 constitute an EamA 1 domain. The EamA 2 domain occupies L183–L288.

The protein belongs to the EamA transporter family.

It localises to the cell membrane. This is an uncharacterized protein from Helicobacter pylori (strain ATCC 700392 / 26695) (Campylobacter pylori).